We begin with the raw amino-acid sequence, 208 residues long: FMRFamide-like neuropeptide 18 (208 aa).

The signal sequence occupies residues 1–21; sequence MQRWSGVLLISLCCLLRGALA. The propeptide occupies 22–83; it reads YTEPIYEIVE…VWEKRESSVQ (62 aa). Phe93 carries the post-translational modification Phenylalanine amide. The propeptide occupies 97–101; the sequence is AYFDE. At Phe111 the chain carries Phenylalanine amide. Positions 115–119 are excised as a propeptide; it reads SYFDE. Phe129 is subject to Phenylalanine amide. Positions 133–137 are excised as a propeptide; the sequence is DVPMD. Position 147 is a phenylalanine amide (Phe147). Positions 151-158 are excised as a propeptide; the sequence is DYMADSFD. 2 positions are modified to phenylalanine amide: Phe169 and Phe180. The propeptide occupies 184–195; it reads SDLEEHYAGVLL. Phe205 is modified (phenylalanine amide).

It belongs to the FARP (FMRFamide related peptide) family. Post-translationally, may be processed by convertase egl-3. Expressed in head neurons and weakly in ventral nerve cord. Expressed in the interneurons AVA, AIY and RIG, the motor neuron RIM and the pharyngeal neurons M2 and M3. EMPGVLRF-amide: Expressed in cholinergic pharyngeal motoneurons M2 and M3.

Its subcellular location is the secreted. FMRFamide-like neuropeptides. Ligand to G-protein coupled receptor npr-1. Involved in modulating locomotion quiescence during the sleep-like state called lethargus which occurs during molting between larval and adult stages, acting via npr-1. Together with flp-1, plays a homeostatic role by acting on the GABAergic neural transmission at neuromuscular junctions to prevent overexcitation of the locomotor circuit. Plays a role in the navigational capacity of sperm and the targeting of sperm derived from males to the fertilization site in the uterus of hermaphrodites. In terms of biological role, SVPGVLRF-amide: Excites muscle tension. Its function is as follows. Activates the G-protein coupled receptor npr-1 more effectively than other flp-18 peptides. Inhibits the activity of dissected pharyngeal myogenic muscle system. The sequence is that of FMRFamide-like neuropeptide 18 from Caenorhabditis elegans.